The chain runs to 612 residues: Sulfite reductase [NADPH] flavoprotein alpha-component (612 aa).

Residues 64-202 (VTLISASQTG…QAQQWRQQVV (139 aa)) form the Flavodoxin-like domain. FMN is bound by residues 70 to 75 (SQTGNA), 117 to 120 (STQG), and 153 to 162 (LGDTSYEHFC). The FAD-binding FR-type domain occupies 247–461 (TAPLTAQLSV…IEHNDNFRLP (215 aa)). Residues threonine 335, lysine 369, 399 to 402 (RLYS), 417 to 419 (TVG), tyrosine 423, and 432 to 435 (GGAS) each bind FAD. Residues 532–533 (SR), 538–542 (KIYVQ), and aspartate 574 each bind NADP(+). Tyrosine 612 contacts FAD.

Belongs to the NADPH-dependent sulphite reductase flavoprotein subunit CysJ family. This sequence in the N-terminal section; belongs to the flavodoxin family. The protein in the C-terminal section; belongs to the flavoprotein pyridine nucleotide cytochrome reductase family. In terms of assembly, alpha(8)-beta(8). The alpha component is a flavoprotein, the beta component is a hemoprotein. The cofactor is FAD. Requires FMN as cofactor.

The catalysed reaction is hydrogen sulfide + 3 NADP(+) + 3 H2O = sulfite + 3 NADPH + 4 H(+). It functions in the pathway sulfur metabolism; hydrogen sulfide biosynthesis; hydrogen sulfide from sulfite (NADPH route): step 1/1. In terms of biological role, component of the sulfite reductase complex that catalyzes the 6-electron reduction of sulfite to sulfide. This is one of several activities required for the biosynthesis of L-cysteine from sulfate. The flavoprotein component catalyzes the electron flow from NADPH -&gt; FAD -&gt; FMN to the hemoprotein component. The sequence is that of Sulfite reductase [NADPH] flavoprotein alpha-component from Yersinia pseudotuberculosis serotype O:1b (strain IP 31758).